The primary structure comprises 318 residues: Ferric enterobactin-binding periplasmic protein FepB (318 aa).

The first 26 residues, 1 to 26 (MRLAPLYRNALLLTGLLLSGIAAVQA), serve as a signal peptide directing secretion. Residues 48-318 (RIVSTSVTLT…QVLDRLKALF (271 aa)) enclose the Fe/B12 periplasmic-binding domain.

This sequence belongs to the bacterial solute-binding protein 8 family. The complex is composed of two ATP-binding proteins (FepC), two transmembrane proteins (FepD and FepG) and a solute-binding protein (FepB).

It is found in the periplasm. Functionally, part of the ABC transporter complex FepBDGC involved in ferric enterobactin uptake. Binds ferric enterobactin. The polypeptide is Ferric enterobactin-binding periplasmic protein FepB (fepB) (Escherichia coli O6:H1 (strain CFT073 / ATCC 700928 / UPEC)).